The chain runs to 306 residues: Methionyl-tRNA formyltransferase (306 aa).

108–111 (SLLP) provides a ligand contact to (6S)-5,6,7,8-tetrahydrofolate.

Belongs to the Fmt family.

The catalysed reaction is L-methionyl-tRNA(fMet) + (6R)-10-formyltetrahydrofolate = N-formyl-L-methionyl-tRNA(fMet) + (6S)-5,6,7,8-tetrahydrofolate + H(+). Attaches a formyl group to the free amino group of methionyl-tRNA(fMet). The formyl group appears to play a dual role in the initiator identity of N-formylmethionyl-tRNA by promoting its recognition by IF2 and preventing the misappropriation of this tRNA by the elongation apparatus. The chain is Methionyl-tRNA formyltransferase from Pseudarthrobacter chlorophenolicus (strain ATCC 700700 / DSM 12829 / CIP 107037 / JCM 12360 / KCTC 9906 / NCIMB 13794 / A6) (Arthrobacter chlorophenolicus).